The sequence spans 105 residues: Phosphoribosyl-ATP pyrophosphatase (105 aa).

It belongs to the PRA-PH family.

It is found in the cytoplasm. It carries out the reaction 1-(5-phospho-beta-D-ribosyl)-ATP + H2O = 1-(5-phospho-beta-D-ribosyl)-5'-AMP + diphosphate + H(+). It functions in the pathway amino-acid biosynthesis; L-histidine biosynthesis; L-histidine from 5-phospho-alpha-D-ribose 1-diphosphate: step 2/9. The chain is Phosphoribosyl-ATP pyrophosphatase from Ruthia magnifica subsp. Calyptogena magnifica.